We begin with the raw amino-acid sequence, 209 residues long: Thymidylate kinase (209 aa).

10–17 is a binding site for ATP; sequence GIDGCGKT.

It belongs to the thymidylate kinase family.

It catalyses the reaction dTMP + ATP = dTDP + ADP. Phosphorylation of dTMP to form dTDP in both de novo and salvage pathways of dTTP synthesis. The chain is Thymidylate kinase from Synechococcus sp. (strain CC9605).